The chain runs to 190 residues: FUN14 domain-containing protein 2 (190 aa).

The segment covering 1-13 (METSTQRTGSHLA) has biased composition (polar residues). A disordered region spans residues 1 to 31 (METSTQRTGSHLAQTAAARHSASSRGEAARV). Over 1–81 (METSTQRTGS…GQESGPSAEK (81 aa)) the chain is Cytoplasmic. Phosphoserine is present on residues Ser10 and Ser54. The chain crosses the membrane as a helical span at residues 82-102 (YSVATQLLIGGVTGWCTGFIF). At 103-108 (QKVGKL) the chain is on the mitochondrial intermembrane side. The chain crosses the membrane as a helical span at residues 109-129 (AATAVGGGFFLLQLANHTGYI). The Cytoplasmic segment spans residues 130-165 (KVDWQRVEKDMKKAKEQLKIRKSNQIPTEVKSKAEE). Position 152 is a phosphoserine (Ser152). The chain crosses the membrane as a helical span at residues 166-186 (VVSFVKKNVLVTGGFFGGFLL). Topologically, residues 187-190 (GMAS) are mitochondrial intermembrane.

This sequence belongs to the FUN14 family.

Its subcellular location is the mitochondrion outer membrane. It localises to the nucleus. Functionally, binds directly and specifically 1,2-Diacyl-sn-glycero-3-phospho-(1'-myo-inositol-3',4',5'-bisphosphate) (PIP3) leading to the recruitment of PIP3 to mitochondria and may play a role in the regulation of the platelet activation via AKT/GSK3B/cGMP signaling pathways. May act as transcription factor that regulates SREBP1 (isoform SREBP-1C) expression in order to modulate triglyceride (TG) homeostasis in hepatocytes. This chain is FUN14 domain-containing protein 2, found in Bos taurus (Bovine).